The chain runs to 119 residues: Translation initiation factor 1A (119 aa).

A disordered region spans residues 1–24 (MSEDDVDNSVKDFESGEENEESIG). In terms of domain architecture, S1-like spans 24–98 (GRVILPNKKK…EKADVVYRYT (75 aa)).

The protein belongs to the eIF-1A family.

Seems to be required for maximal rate of protein biosynthesis. Enhances ribosome dissociation into subunits and stabilizes the binding of the initiator Met-tRNA(I) to 40 S ribosomal subunits. The polypeptide is Translation initiation factor 1A (eIF1A) (Thermoplasma acidophilum (strain ATCC 25905 / DSM 1728 / JCM 9062 / NBRC 15155 / AMRC-C165)).